Reading from the N-terminus, the 21-residue chain is 78 kDa dihydrolipoyllysine-residue acetyltransferase component of pyruvate dehydrogenase complex (21 aa).

This sequence belongs to the 2-oxoacid dehydrogenase family. As to quaternary structure, forms a 60-polypeptide structural core. (R)-lipoate is required as a cofactor.

It localises to the mitochondrion matrix. It catalyses the reaction N(6)-[(R)-dihydrolipoyl]-L-lysyl-[protein] + acetyl-CoA = N(6)-[(R)-S(8)-acetyldihydrolipoyl]-L-lysyl-[protein] + CoA. In terms of biological role, the pyruvate dehydrogenase complex catalyzes the overall conversion of pyruvate to acetyl-CoA and CO(2). It contains multiple copies of three enzymatic components: pyruvate dehydrogenase (E1), dihydrolipoamide acetyltransferase (E2) and lipoamide dehydrogenase (E3). In Solanum tuberosum (Potato), this protein is 78 kDa dihydrolipoyllysine-residue acetyltransferase component of pyruvate dehydrogenase complex.